A 953-amino-acid chain; its full sequence is Pyruvate, phosphate dikinase, chloroplastic (953 aa).

The N-terminal 77 residues, 1-77, are a transit peptide targeting the chloroplast; it reads MMSSLSVEGM…VLNPVSPPVT (77 aa). A disordered region spans residues 55–74; sequence PELRSSGLTPPRAVLNPVSP. T533 bears the Phosphothreonine; by PDRP1 mark. H535 serves as the catalytic Tele-phosphohistidine intermediate. Substrate is bound by residues R641, R698, E827, G848, T849, N850, and D851. Residue E827 participates in Mg(2+) binding. Mg(2+) is bound at residue D851. Catalysis depends on C913, which acts as the Proton donor.

The protein belongs to the PEP-utilizing enzyme family. In terms of assembly, homotetramer. It depends on Mg(2+) as a cofactor. Post-translationally, phosphorylation of Thr-533 in the dark inactivates the enzyme. Dephosphorylation upon light stimulation reactivates the enzyme.

Its subcellular location is the plastid. The protein resides in the chloroplast. The enzyme catalyses pyruvate + phosphate + ATP = phosphoenolpyruvate + AMP + diphosphate + H(+). The protein operates within photosynthesis; C4 acid pathway. Activated by light-induced dephosphorylation. Inhibited by dark-induced phosphorylation. Both reactions are catalyzed by PDRP1. Inactivated by cold due to the dissociation of the homotetramer. In terms of biological role, formation of phosphoenolpyruvate, which is the primary acceptor of CO(2) in C4 and some Crassulacean acid metabolism plants. The sequence is that of Pyruvate, phosphate dikinase, chloroplastic from Flaveria bidentis (Coastal plain yellowtops).